We begin with the raw amino-acid sequence, 942 residues long: Protein inturned (942 aa).

Positions 1 to 13 (MADPARRDPRGRA) are enriched in basic and acidic residues. Disordered regions lie at residues 1 to 54 (MADP…LEPE) and 129 to 150 (PKRHHKKKSSNTGPVSILKHQS). A compositionally biased stretch (acidic residues) spans 22 to 32 (SQEEEEEESDS). Positions 33 to 48 (DAGASSLGSCSSASSD) are enriched in low complexity. Residues 138–150 (SNTGPVSILKHQS) are compositionally biased toward polar residues. Positions 189–267 (LVGVIHQTKW…PMQVKLTFEN (79 aa)) constitute a PDZ domain. Phosphoserine is present on residues Ser-674 and Ser-678. The disordered stretch occupies residues 707–752 (KARKPSPSRIGGGREPGEGEENVGLSPHTTPDTVRKQRESEGSDDN).

Belongs to the inturned family. In terms of assembly, component of the CPLANE (ciliogenesis and planar polarity effectors) complex, composed of INTU, FUZ and WDPCP. Interacts with CPLANE1. Interacts with NPHP4 and DAAM1; INTU is mediating the interaction between NPHP4 and DAAM1.

It is found in the cytoplasm. It localises to the cell surface. The protein resides in the cytoskeleton. Its subcellular location is the cilium basal body. The protein localises to the microtubule organizing center. It is found in the centrosome. It localises to the centriole. Plays a key role in ciliogenesis and embryonic development. Regulator of cilia formation by controlling the organization of the apical actin cytoskeleton and the positioning of the basal bodies at the apical cell surface, which in turn is essential for the normal orientation of elongating ciliary microtubules. Plays a key role in definition of cell polarity via its role in ciliogenesis but not via conversion extension. Has an indirect effect on hedgehog signaling. Proposed to function as core component of the CPLANE (ciliogenesis and planar polarity effectors) complex involved in the recruitment of peripheral IFT-A proteins to basal bodies. Required for recruitment of CPLANE2 to the mother centriole. Binds phosphatidylinositol 3-phosphate with highest affinity, followed by phosphatidylinositol 4-phosphate and phosphatidylinositol 5-phosphate. The protein is Protein inturned (Intu) of Rattus norvegicus (Rat).